The primary structure comprises 253 residues: RBPJ-interacting and tubulin-associated protein 1 (253 aa).

3 disordered regions span residues 30–89 (SPAR…KNKY), 127–175 (TPPA…LCVP), and 188–253 (HLTV…PPWK). Polar residues predominate over residues 71–81 (SPSSRGSTPNL). A Nuclear localization signal motif is present at residues 81-97 (LTPRKKNKYRLIGHAPS). The interaction with RBPJ/RBPSUH stretch occupies residues 112-140 (RMAVGDAAKLRTLFWTPPATPRGSHTPCP). An interaction with tubulin region spans residues 140–253 (PRETPLRAIH…CPPKPKPPWK (114 aa)). Polar residues predominate over residues 188–228 (HLTVPSTGHPASSAPQTNGPWSPRPNTSGATVQSPLVTSKA).

Belongs to the RITA family. Interacts with RBPJ/RBPSUH.

Its subcellular location is the cytoplasm. The protein localises to the nucleus. The protein resides in the cytoskeleton. It localises to the microtubule organizing center. It is found in the centrosome. In terms of biological role, tubulin-binding protein that acts as a negative regulator of Notch signaling pathway. Shuttles between the cytoplasm and the nucleus and mediates the nuclear export of RBPJ/RBPSUH, thereby preventing the interaction between RBPJ/RBPSUH and NICD product of Notch proteins (Notch intracellular domain), leading to down-regulate Notch-mediated transcription. May play a role in neurogenesis. The chain is RBPJ-interacting and tubulin-associated protein 1 (Rita1) from Mus musculus (Mouse).